The following is a 479-amino-acid chain: Phosphatidylinositol 4-kinase type 2-alpha (479 aa).

Position 1 is an N-acetylmethionine (Met-1). Residues 1 to 74 are disordered; sequence MDETSPLVSP…ARGAAAQGQT (74 aa). A phosphoserine mark is found at Ser-5, Ser-9, Ser-44, Ser-47, and Ser-51. The segment covering 31–45 has biased composition (low complexity); that stretch reads VPGGAVRVAAAAGSG. The segment covering 53–66 has biased composition (basic and acidic residues); it reads GHDRERQPLLDRAR. Residues 124–453 form the PI3K/PI4K catalytic domain; that stretch reads CIFPERIYQG…VQMPPVIVET (330 aa). The segment at 130–136 is G-loop; the sequence is IYQGSSG. ATP-binding positions include 131 to 137 and Lys-152; that span reads YQGSSGS. The tract at residues 157 to 159 is important for substrate binding; that stretch reads EPY. Residues 165–178 are important for interaction with membranes; the sequence is KWTKWLQKLCCPCC. 4 S-palmitoyl cysteine lipidation sites follow: Cys-174, Cys-175, Cys-177, and Cys-178. 261–264 lines the ATP pocket; it reads QLFV. The tract at residues 268–276 is important for interaction with membranes; sequence KDADYWLRR. Residues 305 to 313 are catalytic loop; that stretch reads RNTDRGNDN. The segment at 344–364 is activation loop; it reads AIDNGLAFPLKHPDSWRAYPF. ATP is bound at residue Asp-346. Residues 359-368 form an important for interaction with membranes region; it reads WRAYPFYWAW. Ser-462 bears the Phosphoserine mark.

This sequence belongs to the PI3/PI4-kinase family. Type II PI4K subfamily. In terms of assembly, associates with the BLOC-1 and the AP-3 complexes; the BLOC-1 complex is required for optimal binding of PI4K2A to the AP-3 complex. Interacts with BLOC1S5 and DTNBP1. Interacts with FOS; this interaction may enhance phosphatidylinositol phosphorylation activity. Interacts with ITCH. Interacts with ATG9A. Palmitoylated by ZDHHC3 and ZDHHC7 in the CCPCC motif. Palmitoylation is cholesterol-dependent, and required for TGN localization. Post-translationally, ubiquitinated by ITCH; this does not lead to proteasomal degradation. In terms of tissue distribution, widely expressed. Highest expression is observed in kidney, brain, heart, skeletal muscle, and placenta and lowest expression is observed in colon, thymus, and small intestine.

Its subcellular location is the golgi apparatus. It is found in the trans-Golgi network membrane. It localises to the membrane raft. The protein localises to the cell projection. The protein resides in the dendrite. Its subcellular location is the presynaptic cell membrane. It is found in the synapse. It localises to the synaptosome. The protein localises to the mitochondrion. The protein resides in the endosome. Its subcellular location is the endosome membrane. It is found in the cytoplasmic vesicle. It localises to the membrane. The protein localises to the cell membrane. The protein resides in the perikaryon. Its subcellular location is the neuron projection. It carries out the reaction a 1,2-diacyl-sn-glycero-3-phospho-(1D-myo-inositol) + ATP = a 1,2-diacyl-sn-glycero-3-phospho-(1D-myo-inositol 4-phosphate) + ADP + H(+). Its function is as follows. Membrane-bound phosphatidylinositol-4 kinase (PI4-kinase) that catalyzes the phosphorylation of phosphatidylinositol (PI) to phosphatidylinositol 4-phosphate (PI4P), a lipid that plays important roles in endocytosis, Golgi function, protein sorting and membrane trafficking and is required for prolonged survival of neurons. Besides, phosphorylation of phosphatidylinositol (PI) to phosphatidylinositol 4-phosphate (PI4P) is the first committed step in the generation of phosphatidylinositol 4,5-bisphosphate (PIP2), a precursor of the second messenger inositol 1,4,5-trisphosphate (InsP3). In Homo sapiens (Human), this protein is Phosphatidylinositol 4-kinase type 2-alpha (PI4K2A).